We begin with the raw amino-acid sequence, 233 residues long: Ribosome maturation protein SDO1 homolog (233 aa).

The protein belongs to the SDO1/SBDS family.

The sequence is that of Ribosome maturation protein SDO1 homolog from Aeropyrum pernix (strain ATCC 700893 / DSM 11879 / JCM 9820 / NBRC 100138 / K1).